A 261-amino-acid chain; its full sequence is Ethanolamine ammonia-lyase small subunit (261 aa).

3 residues coordinate adenosylcob(III)alamin: V158, E179, and C208.

Belongs to the EutC family. The basic unit is a heterodimer which dimerizes to form tetramers. The heterotetramers trimerize; 6 large subunits form a core ring with 6 small subunits projecting outwards. Requires adenosylcob(III)alamin as cofactor.

Its subcellular location is the bacterial microcompartment. The enzyme catalyses ethanolamine = acetaldehyde + NH4(+). Its pathway is amine and polyamine degradation; ethanolamine degradation. Functionally, catalyzes the deamination of various vicinal amino-alcohols to oxo compounds. Allows this organism to utilize ethanolamine as the sole source of nitrogen and carbon in the presence of external vitamin B12. In Bradyrhizobium diazoefficiens (strain JCM 10833 / BCRC 13528 / IAM 13628 / NBRC 14792 / USDA 110), this protein is Ethanolamine ammonia-lyase small subunit.